A 188-amino-acid polypeptide reads, in one-letter code: dCTP deaminase (188 aa).

Residues 111–116, 135–137, glutamine 156, tyrosine 170, and glutamine 180 contribute to the dCTP site; these read KSTYAR and TLE. Residue glutamate 137 is the Proton donor/acceptor of the active site.

The protein belongs to the dCTP deaminase family. As to quaternary structure, homotrimer.

The enzyme catalyses dCTP + H2O + H(+) = dUTP + NH4(+). The protein operates within pyrimidine metabolism; dUMP biosynthesis; dUMP from dCTP (dUTP route): step 1/2. In terms of biological role, catalyzes the deamination of dCTP to dUTP. The polypeptide is dCTP deaminase (Nitrosomonas europaea (strain ATCC 19718 / CIP 103999 / KCTC 2705 / NBRC 14298)).